The sequence spans 114 residues: MVANVSGIGSVLQQMQAMAAQANGGVASPAAALAGSGAATAGTFASAMKASLDKISGDQQHALGEARAFEVGAANVSLNDVMVDMQKANIGFQFGLQVRNKLVSAYNEVMQMSV.

The protein belongs to the FliE family.

The protein localises to the bacterial flagellum basal body. The chain is Flagellar hook-basal body complex protein FliE from Burkholderia vietnamiensis (strain G4 / LMG 22486) (Burkholderia cepacia (strain R1808)).